Reading from the N-terminus, the 311-residue chain is MKVAVLGAAGGIGQALALLLKTQLPADSKLSLYDIAPVTPGVAVDLSHIPTAVEVKGFAGQDPSPALEGADVVLISAGVARKPGMDRSDLFNINAGIVRNLVEKCAATCPKALIGIITNPVNTTVAIAAEVLKAAGVYDKNRLFGVTTLDVIRSETFVAEAKGLNVADVNVNVIGGHSGVTILPLLSQIEGVSFSDEEVAALTTRIQNAGTEVVEAKAGGGSATLSMGQAACRFGLSLVRGLQGEANVVECAYVDGGSEHAEFFAQPILLGKNGVEKVLAYGDVSEFEANARDAMLDTLNADIKLGVEFVK.

Residues 7–13 and aspartate 34 contribute to the NAD(+) site; that span reads GAAGGIG. Substrate contacts are provided by arginine 81 and arginine 87. Residues asparagine 94 and 117 to 119 contribute to the NAD(+) site; that span reads ITN. Substrate contacts are provided by asparagine 119 and arginine 153. Histidine 177 functions as the Proton acceptor in the catalytic mechanism. An NAD(+)-binding site is contributed by methionine 227.

The protein belongs to the LDH/MDH superfamily. MDH type 1 family. As to quaternary structure, homodimer.

The enzyme catalyses (S)-malate + NAD(+) = oxaloacetate + NADH + H(+). Functionally, catalyzes the reversible oxidation of malate to oxaloacetate. The protein is Malate dehydrogenase of Shewanella woodyi (strain ATCC 51908 / MS32).